We begin with the raw amino-acid sequence, 154 residues long: MKKKDILIVGCGNLLFGDDGFGCEVVSKLEKMNLPDNVEVIDAGASGAYYLMTLVDEDIKKIIVVDAIDFDLEPGTIKKIDVDELPNIKKYSFDAHNVPLAPFLKDLHNKGIEVVVIGCQGKEFTMPDIKPGLSEEVAKAVDKAIEIILGEIKK.

Belongs to the peptidase A31 family.

This chain is Putative hydrogenase maturation protease MJ0253, found in Methanocaldococcus jannaschii (strain ATCC 43067 / DSM 2661 / JAL-1 / JCM 10045 / NBRC 100440) (Methanococcus jannaschii).